We begin with the raw amino-acid sequence, 1237 residues long: Zinc finger protein 687 (1237 aa).

2 disordered regions span residues 1–80 (MGDM…PDIS) and 96–330 (EALA…PLKV). A compositionally biased stretch (low complexity) spans 97-111 (ALAGGSAGDGAQAAG). Ser-102, Ser-129, and Ser-140 each carry phosphoserine. The span at 132-144 (PSLPGTPHSPAPP) shows a compositional bias: pro residues. The residue at position 148 (Thr-148) is a Phosphothreonine. 6 positions are modified to phosphoserine: Ser-227, Ser-242, Ser-251, Ser-253, Ser-266, and Ser-271. Positions 234-244 (LAQQGSGSSPK) are enriched in polar residues. Lys-285 participates in a covalent cross-link: Glycyl lysine isopeptide (Lys-Gly) (interchain with G-Cter in SUMO2). Positions 297-310 (SSPGSPQSPSSGAE) are enriched in low complexity. Glycyl lysine isopeptide (Lys-Gly) (interchain with G-Cter in SUMO2) cross-links involve residues Lys-336 and Lys-372. Position 374 is a phosphoserine (Ser-374). The residue at position 377 (Thr-377) is a Phosphothreonine. Residues Lys-384, Lys-397, and Lys-422 each participate in a glycyl lysine isopeptide (Lys-Gly) (interchain with G-Cter in SUMO2) cross-link. Ser-433 is subject to Phosphoserine. Residues Lys-435, Lys-439, Lys-451, and Lys-464 each participate in a glycyl lysine isopeptide (Lys-Gly) (interchain with G-Cter in SUMO2) cross-link. Phosphoserine is present on Ser-495. The C2H2-type 1; degenerate zinc finger occupies 533 to 552 (YRCLECGDAFSLEKSLARHY). 5 C2H2-type zinc fingers span residues 705 to 727 (NVCP…QRMH), 764 to 787 (YRCP…QTSH), 792 to 815 (HKCP…YSQH), 827 to 849 (YKCA…FDQH), and 858 to 881 (FKCP…KNTH). Residues 880 to 890 (THQSGRLEETA) are compositionally biased toward basic and acidic residues. Residues 880–957 (THQSGRLEET…LGSKGLKGGG (78 aa)) form a disordered region. At Thr-900 the chain carries Phosphothreonine. Positions 915–925 (AAPATEESSSS) are enriched in low complexity. A Glycyl lysine isopeptide (Lys-Gly) (interchain with G-Cter in SUMO2) cross-link involves residue Lys-954. 2 consecutive C2H2-type zinc fingers follow at residues 963-986 (WTCG…KKEH) and 993-1016 (FPCR…RVNH). Lys-1043 participates in a covalent cross-link: Glycyl lysine isopeptide (Lys-Gly) (interchain with G-Cter in SUMO2). Residues 1051–1121 (LQLGAQSPGR…LRYRSSSSTE (71 aa)) are disordered. A Phosphoserine modification is found at Ser-1057. Omega-N-methylarginine is present on Arg-1060. A phosphoserine mark is found at Ser-1082, Ser-1083, and Ser-1085. Position 1101 is an omega-N-methylarginine (Arg-1101). A phosphoserine mark is found at Ser-1106 and Ser-1118. Residues 1135–1158 (QQCLDCGLCFASPGSLSRHRFISH) form a C2H2-type 9 zinc finger. The tract at residues 1159 to 1195 (KKRRGVGKASALGLGDGEEEAPPSRSDPDGGDSPLPA) is disordered. 3 positions are modified to phosphoserine: Ser-1184, Ser-1191, and Ser-1211. The segment at 1200–1222 (LTCKVCGKSCDSPLNLKTHFRTH) adopts a C2H2-type 10 zinc-finger fold.

The protein belongs to the krueppel C2H2-type zinc-finger protein family. In terms of assembly, interacts with ZMYND8. Widely expressed with highest levels in obvary, muscle, blood and lung.

It is found in the cytoplasm. The protein resides in the nucleus. May be involved in transcriptional regulation. This Homo sapiens (Human) protein is Zinc finger protein 687 (ZNF687).